The sequence spans 270 residues: Protoheme IX farnesyltransferase (270 aa).

The next 7 membrane-spanning stretches (helical) occupy residues 13–30, 33–53, 95–115, 129–149, 156–176, 207–227, and 249–269; these read LALL…LVPD, HATL…GSAL, LLVL…ALAW, LALA…WTLA, YRII…FWLF, LWLG…LMAP, and EATL…ALLL.

It belongs to the UbiA prenyltransferase family. Protoheme IX farnesyltransferase subfamily.

The protein resides in the cell inner membrane. The catalysed reaction is heme b + (2E,6E)-farnesyl diphosphate + H2O = Fe(II)-heme o + diphosphate. It participates in porphyrin-containing compound metabolism; heme O biosynthesis; heme O from protoheme: step 1/1. Converts heme B (protoheme IX) to heme O by substitution of the vinyl group on carbon 2 of heme B porphyrin ring with a hydroxyethyl farnesyl side group. The protein is Protoheme IX farnesyltransferase of Geobacter sulfurreducens (strain ATCC 51573 / DSM 12127 / PCA).